Consider the following 483-residue polypeptide: Alginate biosynthesis protein AlgA (483 aa).

This sequence belongs to the mannose-6-phosphate isomerase type 2 family. Monomer. The cofactor is Co(2+).

The catalysed reaction is D-mannose 6-phosphate = D-fructose 6-phosphate. The enzyme catalyses alpha-D-mannose 1-phosphate + GTP + H(+) = GDP-alpha-D-mannose + diphosphate. It functions in the pathway nucleotide-sugar biosynthesis; GDP-alpha-D-mannose biosynthesis; GDP-alpha-D-mannose from alpha-D-mannose 1-phosphate (GTP route): step 1/1. Its pathway is nucleotide-sugar biosynthesis; GDP-alpha-D-mannose biosynthesis; alpha-D-mannose 1-phosphate from D-fructose 6-phosphate: step 1/2. Produces a precursor for alginate polymerization. The alginate layer provides a protective barrier against host immune defenses and antibiotics. The chain is Alginate biosynthesis protein AlgA (algA) from Pseudomonas syringae pv. tomato (strain ATCC BAA-871 / DC3000).